Reading from the N-terminus, the 189-residue chain is MAATTTMATLNLPSLTSHPNSSTFPKHPQPLQFPFRTTTNPISLSSTRTTRLRPIAAVEAPEKIEQLGTQLSGLTLEEARVLVDWLQDKLGVSAASFAPAAAVAAPGAPADAAPAVEEKTEFDVSIDEVPSNARISVIKAVRALTSLGLKEAKELIEGLPKKLKEGVSKDDAEDAKKQLEDAGAKVSIV.

Disordered regions lie at residues 1-30 (MAAT…HPQP) and 165-189 (EGVS…VSIV). The transit peptide at 1-56 (MAATTTMATLNLPSLTSHPNSSTFPKHPQPLQFPFRTTTNPISLSSTRTTRLRPIA) directs the protein to the chloroplast. Positions 11-24 (NLPSLTSHPNSSTF) are enriched in polar residues. A compositionally biased stretch (basic and acidic residues) spans 165 to 183 (EGVSKDDAEDAKKQLEDAG).

As to quaternary structure, component of the chloroplast large ribosomal subunit (LSU). Mature 70S chloroplast ribosomes of higher plants consist of a small (30S) and a large (50S) subunit. The 30S small subunit contains 1 molecule of ribosomal RNA (16S rRNA) and 24 different proteins. The 50S large subunit contains 3 rRNA molecules (23S, 5S and 4.5S rRNA) and 33 different proteins.

It localises to the plastid. The protein localises to the chloroplast. In terms of biological role, component of the chloroplast ribosome (chloro-ribosome), a dedicated translation machinery responsible for the synthesis of chloroplast genome-encoded proteins, including proteins of the transcription and translation machinery and components of the photosynthetic apparatus. This is Large ribosomal subunit protein bL12c (RPL12) from Spinacia oleracea (Spinach).